A 192-amino-acid polypeptide reads, in one-letter code: Phosphoheptose isomerase (192 aa).

Positions L35 to N192 constitute an SIS domain. N50–G52 is a binding site for substrate. 2 residues coordinate Zn(2+): H59 and E63. Residues E63, N92–D93, S118–S120, S123, and Q170 each bind substrate. Q170 and H178 together coordinate Zn(2+).

The protein belongs to the SIS family. GmhA subfamily. As to quaternary structure, homotetramer. Zn(2+) serves as cofactor.

Its subcellular location is the cytoplasm. It carries out the reaction 2 D-sedoheptulose 7-phosphate = D-glycero-alpha-D-manno-heptose 7-phosphate + D-glycero-beta-D-manno-heptose 7-phosphate. It functions in the pathway carbohydrate biosynthesis; D-glycero-D-manno-heptose 7-phosphate biosynthesis; D-glycero-alpha-D-manno-heptose 7-phosphate and D-glycero-beta-D-manno-heptose 7-phosphate from sedoheptulose 7-phosphate: step 1/1. Its pathway is bacterial outer membrane biogenesis; LPS core biosynthesis. Catalyzes the isomerization of sedoheptulose 7-phosphate in D-glycero-D-manno-heptose 7-phosphate. This is Phosphoheptose isomerase from Helicobacter pylori (strain ATCC 700392 / 26695) (Campylobacter pylori).